Here is a 402-residue protein sequence, read N- to C-terminus: 1-deoxy-D-xylulose 5-phosphate reductoisomerase (402 aa).

Positions 13, 14, 15, 16, and 126 each coordinate NADPH. Lys-127 serves as a coordination point for 1-deoxy-D-xylulose 5-phosphate. Position 128 (Glu-128) interacts with NADPH. Mn(2+) is bound at residue Asp-152. 1-deoxy-D-xylulose 5-phosphate contacts are provided by Ser-153, Glu-154, Ser-188, and His-211. Glu-154 serves as a coordination point for Mn(2+). An NADPH-binding site is contributed by Gly-217. 1-deoxy-D-xylulose 5-phosphate contacts are provided by Ser-224, Asn-229, Lys-230, and Glu-233. Glu-233 provides a ligand contact to Mn(2+).

Belongs to the DXR family. Mg(2+) is required as a cofactor. It depends on Mn(2+) as a cofactor.

It carries out the reaction 2-C-methyl-D-erythritol 4-phosphate + NADP(+) = 1-deoxy-D-xylulose 5-phosphate + NADPH + H(+). Its pathway is isoprenoid biosynthesis; isopentenyl diphosphate biosynthesis via DXP pathway; isopentenyl diphosphate from 1-deoxy-D-xylulose 5-phosphate: step 1/6. In terms of biological role, catalyzes the NADPH-dependent rearrangement and reduction of 1-deoxy-D-xylulose-5-phosphate (DXP) to 2-C-methyl-D-erythritol 4-phosphate (MEP). The sequence is that of 1-deoxy-D-xylulose 5-phosphate reductoisomerase from Psychrobacter cryohalolentis (strain ATCC BAA-1226 / DSM 17306 / VKM B-2378 / K5).